A 138-amino-acid polypeptide reads, in one-letter code: Basic phospholipase A2 sistruxin B (138 aa).

A signal peptide spans 1–16; sequence MRALWIVAVLLVGVEG. Disulfide bonds link Cys42-Cys131, Cys44-Cys60, Cys59-Cys111, Cys65-Cys138, Cys66-Cys104, Cys73-Cys97, and Cys91-Cys102. Residues Tyr43, Gly45, and Gly47 each coordinate Ca(2+). His63 is an active-site residue. Asp64 serves as a coordination point for Ca(2+). Asp105 is an active-site residue.

In terms of assembly, heterodimer of an acidic subunit and a basic chain. The acidic subunit is non-toxic, without enzymatic activity and comprises 3 peptides that are cross-linked by 7 disulfide bridges. The basic subunit is toxic, has phospholipase A2 activity and is composed of a single chain. Ca(2+) serves as cofactor. In terms of tissue distribution, expressed by the venom gland.

Its subcellular location is the secreted. The catalysed reaction is a 1,2-diacyl-sn-glycero-3-phosphocholine + H2O = a 1-acyl-sn-glycero-3-phosphocholine + a fatty acid + H(+). Functionally, snake venom phospholipase A2 (PLA2) that shows presynaptic neurotoxicity. PLA2 catalyzes the calcium-dependent hydrolysis of the 2-acyl groups in 3-sn-phosphoglycerides. This is Basic phospholipase A2 sistruxin B from Sistrurus tergeminus (Western massasauga).